Consider the following 420-residue polypeptide: MEETESSTQTPVPQHGISLASYPVRAVIRMRRKIRTLKKSRLQLDLTGGRSLDSAKASLRRQISMDRATLFKSSTYEKQQYFNFDTPTLEKLALNSQIRKRNRKKSRHVLYPGNVRKCLPVEHKSKAKRCLLLFIGIVCFQILNAIENLDDNLQKYDLDGLEKTLQREVFGQKRAIEKLMDHLQDYLATHYHNKPLVLSFNGPSGVGKSHTGRLLAKHFRSIMDNDFVLQYYTMHNCPNENDVTQCQSEMSGLISEMISRAEIEEKIPVFIFDEVEVMPVALLDVLHRYFQLNQSNEYLNAVYILISNIGGNEITKFVLQNASNDFLNLPQELHQIVISSLQKHHSLWDVAEIVPFTLLEKKHILDCFLDELLREGFYPDHSNIESLAGQLRYYTKENKEYSISGCKQVVAKVNLLQPYT.

Residues 130–150 (CLLLFIGIVCFQILNAIENLD) traverse the membrane as a helical segment. ATP is bound at residue 202 to 209 (GPSGVGKS).

The protein belongs to the ClpA/ClpB family. Torsin subfamily.

Its subcellular location is the membrane. This is Torsin-4A-A (tor4a-a) from Xenopus laevis (African clawed frog).